Here is a 244-residue protein sequence, read N- to C-terminus: MRRPAILAAAVLLAPLAACSTVKEAVKGPDLAPVGYPAPLAPMQQQYVSAREPAPQAASANSLWRVGARAFFNDQRASRVGDIVTVMIDIDDSASTKNATNSSRTANMKAGVPHLLGMESSLGKFLPGGFDPASALETNSTTTNAGSGGVSRSEKISLTIAAVVSQVLPNGNMVIQGTQEVRTNAELRQLTVAGIVRPEDISSANTIRHTQIAEARISYGGRGDISRVQKTPAGQSLVEKFSPF.

An N-terminal signal peptide occupies residues 1-18 (MRRPAILAAAVLLAPLAA). Residue cysteine 19 is the site of N-palmitoyl cysteine attachment. Cysteine 19 is lipidated: S-diacylglycerol cysteine.

It belongs to the FlgH family. As to quaternary structure, the basal body constitutes a major portion of the flagellar organelle and consists of five rings (E,L,P,S, and M) mounted on a central rod.

The protein resides in the cell outer membrane. The protein localises to the bacterial flagellum basal body. Functionally, assembles around the rod to form the L-ring and probably protects the motor/basal body from shearing forces during rotation. The polypeptide is Flagellar L-ring protein (flgH) (Caulobacter vibrioides (strain ATCC 19089 / CIP 103742 / CB 15) (Caulobacter crescentus)).